Here is a 121-residue protein sequence, read N- to C-terminus: Protein CHLORORESPIRATORY REDUCTION 42, chloroplastic (121 aa).

In terms of assembly, biogenesis factor component of the plastidial NDH subcomplex A.

Its subcellular location is the plastid. The protein localises to the chloroplast. It is found in the chloroplast stroma. Required for both formation and activity of the chloroplast NAD(P)H dehydrogenase (NDH) complex of the photosynthetic electron transport chain. Functions in assembly or stabilization of the NDH complex; probably involved, together with CRR1 and CRR6, in the incorporation of NdhJ, NdhM, NdhK and NdhI into the NDH subcomplex A assembly intermediate (NAI500) to produce the complex NAI400. The sequence is that of Protein CHLORORESPIRATORY REDUCTION 42, chloroplastic from Arabidopsis thaliana (Mouse-ear cress).